Here is a 112-residue protein sequence, read N- to C-terminus: Probable prefoldin subunit 1 (112 aa).

The protein belongs to the prefoldin subunit beta family. As to quaternary structure, heterohexamer of two PFD-alpha type and four PFD-beta type subunits.

Its function is as follows. Binds specifically to cytosolic chaperonin (c-CPN) and transfers target proteins to it. Binds to nascent polypeptide chain and promotes folding in an environment in which there are many competing pathways for nonnative proteins. This is Probable prefoldin subunit 1 from Schizosaccharomyces pombe (strain 972 / ATCC 24843) (Fission yeast).